The primary structure comprises 157 residues: Phosphopantetheine adenylyltransferase (157 aa).

Threonine 10 is a binding site for substrate. Residues 10 to 11 (TF) and histidine 18 contribute to the ATP site. 3 residues coordinate substrate: lysine 42, leucine 74, and arginine 88. ATP-binding positions include 89–91 (GLR), glutamate 99, and 124–130 (NAFISSS).

This sequence belongs to the bacterial CoaD family. In terms of assembly, homohexamer. Requires Mg(2+) as cofactor.

The protein localises to the cytoplasm. It catalyses the reaction (R)-4'-phosphopantetheine + ATP + H(+) = 3'-dephospho-CoA + diphosphate. It participates in cofactor biosynthesis; coenzyme A biosynthesis; CoA from (R)-pantothenate: step 4/5. Its function is as follows. Reversibly transfers an adenylyl group from ATP to 4'-phosphopantetheine, yielding dephospho-CoA (dPCoA) and pyrophosphate. This is Phosphopantetheine adenylyltransferase from Helicobacter pylori (strain J99 / ATCC 700824) (Campylobacter pylori J99).